Here is a 729-residue protein sequence, read N- to C-terminus: Leucine-rich repeat flightless-interacting protein 1 (729 aa).

An N-acetylthreonine modification is found at T2. The residue at position 16 (S16) is a Phosphoserine. Positions 40–65 (IRMKELERQQKEVEERPDKDFAEKGS) are enriched in basic and acidic residues. Residues 40–98 (IRMKELERQQKEVEERPDKDFAEKGSRNMPSLSAATLASLGGTSSRRGSGDTSISMDTE) are disordered. Residues 78–94 (SLGGTSSRRGSGDTSIS) show a composition bias toward low complexity. 6 positions are modified to phosphoserine: S83, S84, S88, D90, S92, and T97. Residues 94–194 (SMDTEASIRE…LRQREEMLEK (101 aa)) are a coiled coil. A Glycyl lysine isopeptide (Lys-Gly) (interchain with G-Cter in SUMO1) cross-link involves residue K249. A disordered region spans residues 253 to 729 (VEKVGQRETL…SKSKEDCTMS (477 aa)). Residues 260 to 272 (ETLQNSEQEQPKP) are compositionally biased toward polar residues. The segment covering 277 to 297 (DCVDRGVSHPGEKAENQRPAE) has biased composition (basic and acidic residues). A Phosphoserine modification is found at S302. Residues 313-326 (QQVQSQDQENTSDL) are compositionally biased toward polar residues. Residues 327–343 (KNSEQIESHKVTNKSDS) are compositionally biased toward basic and acidic residues. Polar residues predominate over residues 344 to 354 (RASNSPEQSSC). 2 positions are modified to phosphoserine: S346 and S348. Composition is skewed to basic and acidic residues over residues 435–445 (KGTENHGESCL) and 482–494 (KADDAEGRDEKPI). The DNA-binding stretch occupies residues 465–567 (EEAIVQIPQA…KNKKKKAATP (103 aa)). A compositionally biased stretch (polar residues) spans 506–523 (INQSGHQDTTGPGSTDAQ). S538 and S547 each carry phosphoserine. The span at 550–564 (KKTKNKKKKNKKKKA) shows a compositional bias: basic residues. Over residues 608–618 (QKIRAGSREPV) the composition is skewed to basic and acidic residues. Phosphoserine is present on residues S614 and S670. Polar residues-rich tracts occupy residues 667–684 (CDTSQIGSEEGHVTSQHG) and 693–710 (LDNSDLSGQLEGFNSESG). Residues 713 to 729 (AREEVGNSKSKEDCTMS) show a composition bias toward basic and acidic residues.

Belongs to the LRRFIP family. In terms of assembly, homodimer. May also form higher oligomers. Interacts with FLII. Interacts with MYD88. Competes with FLII for MyD88-binding, even in the absence of LPS. As to expression, ubiquitously expressed.

It localises to the nucleus. The protein localises to the cytoplasm. In terms of biological role, transcriptional repressor which preferentially binds to the GC-rich consensus sequence (5'-AGCCCCCGGCG-3') and may regulate expression of TNF, EGFR and PDGFA. May control smooth muscle cells proliferation following artery injury through PDGFA repression. May also bind double-stranded RNA. Positively regulates Toll-like receptor (TLR) signaling in response to agonist probably by competing with the negative FLII regulator for MYD88-binding. In Mus musculus (Mouse), this protein is Leucine-rich repeat flightless-interacting protein 1 (Lrrfip1).